A 119-amino-acid polypeptide reads, in one-letter code: Beta-2-microglobulin (119 aa).

Positions 1 to 20 are cleaved as a signal peptide; the sequence is MARFVVVALLVQLSLFGLEA. Residues 25-114 form the Ig-like C1-type domain; sequence PKIQVYSRYP…VTFSTPKTVK (90 aa). Cys-45 and Cys-100 form a disulfide bridge.

It belongs to the beta-2-microglobulin family. As to quaternary structure, heterodimer of an alpha chain and a beta chain. Beta-2-microglobulin is the beta-chain of major histocompatibility complex class I molecules.

The protein resides in the secreted. Its function is as follows. Component of the class I major histocompatibility complex (MHC). Involved in the presentation of peptide antigens to the immune system. This chain is Beta-2-microglobulin (B2M), found in Saguinus imperator (Emperor tamarin).